The primary structure comprises 213 residues: uncharacterized protein (213 aa).

This is an uncharacterized protein from Magallana gigas (Pacific oyster).